A 190-amino-acid chain; its full sequence is Large ribosomal subunit protein uL5 (190 aa).

It belongs to the universal ribosomal protein uL5 family. As to quaternary structure, part of the 50S ribosomal subunit; contacts the 5S rRNA and probably tRNA. Forms a bridge to the 30S subunit in the 70S ribosome.

Functionally, this is one of the proteins that bind and probably mediate the attachment of the 5S RNA into the large ribosomal subunit, where it forms part of the central protuberance. In the 70S ribosome it contacts protein S13 of the 30S subunit (bridge B1b), connecting the 2 subunits; this bridge is implicated in subunit movement. May contact the P site tRNA; the 5S rRNA and some of its associated proteins might help stabilize positioning of ribosome-bound tRNAs. The chain is Large ribosomal subunit protein uL5 from Methanocaldococcus jannaschii (strain ATCC 43067 / DSM 2661 / JAL-1 / JCM 10045 / NBRC 100440) (Methanococcus jannaschii).